Here is a 985-residue protein sequence, read N- to C-terminus: Probable beta-galactosidase C (985 aa).

The N-terminal stretch at 1–23 (MRILSLLFLLLLGFLAGNRVVSA) is a signal peptide. Substrate-binding residues include Tyr-82, Asn-127, Ala-128, Glu-129, and Asn-187. Glu-188 functions as the Proton donor in the catalytic mechanism. Tyr-251 contacts substrate. A disulfide bond links Cys-257 and Cys-304. Asn-276 carries an N-linked (GlcNAc...) asparagine glycan. The active-site Nucleophile is the Glu-287. A substrate-binding site is contributed by Tyr-353. Asn-391, Asn-434, Asn-517, Asn-602, Asn-677, Asn-715, Asn-720, and Asn-759 each carry an N-linked (GlcNAc...) asparagine glycan.

This sequence belongs to the glycosyl hydrolase 35 family.

It is found in the secreted. It carries out the reaction Hydrolysis of terminal non-reducing beta-D-galactose residues in beta-D-galactosides.. Functionally, cleaves beta-linked terminal galactosyl residues from gangliosides, glycoproteins, and glycosaminoglycans. The chain is Probable beta-galactosidase C (lacC) from Aspergillus clavatus (strain ATCC 1007 / CBS 513.65 / DSM 816 / NCTC 3887 / NRRL 1 / QM 1276 / 107).